The following is a 79-amino-acid chain: Alpha-actitoxin-Ms11a-4 (79 aa).

Positions 1–23 are cleaved as a signal peptide; it reads MKVLVAVLVFALLMCMFVDIAES. The propeptide occupies 24–46; that stretch reads RRRDNPEYPSGLRYDEEMGVFKR. 3 disulfide bridges follow: Cys47–Cys61, Cys54–Cys67, and Cys60–Cys76. Position 78 is a tyrosine amide (Tyr78).

The protein resides in the secreted. It localises to the nematocyst. Its function is as follows. Alpha-toxins act on postsynaptic membranes, they bind to the nicotinic acetylcholine receptors (nAChR) and thus inhibit them. This toxin very weakly competes with alpha-bungarotoxin for binding to orthosteric sites on muscle-type T.carlifornicus (IC(50)=14.95 uM) and human alpha-7/CHRNA7 nAChRs (IC(50)&gt;45 uM). This Metridium senile (Brown sea anemone) protein is Alpha-actitoxin-Ms11a-4.